Here is a 277-residue protein sequence, read N- to C-terminus: Adaptin ear-binding coat-associated protein 1 (277 aa).

The disordered stretch occupies residues 164 to 277 (GNITAKKGGT…APQPSNWVQF (114 aa)). The span at 187–201 (LPPPPGGKVTIPPPS) shows a compositional bias: pro residues. Phosphothreonine is present on threonine 211. The span at 222–234 (SNDSDILLDLDSP) shows a compositional bias: low complexity. Over residues 235 to 245 (APVPTSAPAPA) the composition is skewed to pro residues. Short sequence motifs (WXXF motif) lie at residues 254–257 (WGDF) and 274–277 (WVQF). Residues 258 to 277 (STASSSVPNQAPQPSNWVQF) show a composition bias toward polar residues.

This sequence belongs to the NECAP family. As to quaternary structure, interacts with AP1G1 and AP2A1 components of the adapter protein complexes AP-1 and AP-2. Interacts with the GAE domain proteins GGA1, GGA2 and GGA3. Interacts with AP2A2. In terms of tissue distribution, expressed predominantly in brain (at protein level).

It localises to the cytoplasmic vesicle. Its subcellular location is the clathrin-coated vesicle membrane. The protein localises to the cell membrane. Involved in endocytosis. This Rattus norvegicus (Rat) protein is Adaptin ear-binding coat-associated protein 1 (Necap1).